The following is a 225-amino-acid chain: Enolase-phosphatase E1 (225 aa).

This sequence belongs to the HAD-like hydrolase superfamily. MasA/MtnC family. Monomer. The cofactor is Mg(2+).

The enzyme catalyses 5-methylsulfanyl-2,3-dioxopentyl phosphate + H2O = 1,2-dihydroxy-5-(methylsulfanyl)pent-1-en-3-one + phosphate. The protein operates within amino-acid biosynthesis; L-methionine biosynthesis via salvage pathway; L-methionine from S-methyl-5-thio-alpha-D-ribose 1-phosphate: step 3/6. It participates in amino-acid biosynthesis; L-methionine biosynthesis via salvage pathway; L-methionine from S-methyl-5-thio-alpha-D-ribose 1-phosphate: step 4/6. Functionally, bifunctional enzyme that catalyzes the enolization of 2,3-diketo-5-methylthiopentyl-1-phosphate (DK-MTP-1-P) into the intermediate 2-hydroxy-3-keto-5-methylthiopentenyl-1-phosphate (HK-MTPenyl-1-P), which is then dephosphorylated to form the acireductone 1,2-dihydroxy-3-keto-5-methylthiopentene (DHK-MTPene). The polypeptide is Enolase-phosphatase E1 (Shewanella piezotolerans (strain WP3 / JCM 13877)).